A 282-amino-acid chain; its full sequence is PTS system sorbose-specific EIID component (282 aa).

A PTS EIID domain is found at 13 to 281 (TKITKGDMFK…GIVGYWLGIL (269 aa)). A run of 4 helical transmembrane segments spans residues 135-155 (LGAS…FVAF), 197-217 (GLFI…PLVV), 234-254 (ILDQ…CMYL), and 261-281 (PILL…LGIL).

The protein resides in the cell membrane. In terms of biological role, the phosphoenolpyruvate-dependent sugar phosphotransferase system (PTS), a major carbohydrate active transport system, catalyzes the phosphorylation of incoming sugar substrates concomitant with their translocation across the cell membrane. The enzyme II SorABCD PTS system is involved in L-sorbose transport. The protein is PTS system sorbose-specific EIID component of Lacticaseibacillus casei (Lactobacillus casei).